We begin with the raw amino-acid sequence, 329 residues long: GTP 3',8-cyclase (329 aa).

Residues 8–234 (AFARKFYYLR…QLRSRADGPA (227 aa)) enclose the Radical SAM core domain. R17 is a binding site for GTP. 2 residues coordinate [4Fe-4S] cluster: C24 and C28. Y30 provides a ligand contact to S-adenosyl-L-methionine. C31 contacts [4Fe-4S] cluster. R68 contributes to the GTP binding site. G72 serves as a coordination point for S-adenosyl-L-methionine. GTP is bound at residue T99. Residue S123 coordinates S-adenosyl-L-methionine. K160 contacts GTP. Position 194 (M194) interacts with S-adenosyl-L-methionine. [4Fe-4S] cluster is bound by residues C257 and C260. Residue 262–264 (RLR) participates in GTP binding. C274 is a [4Fe-4S] cluster binding site.

It belongs to the radical SAM superfamily. MoaA family. Monomer and homodimer. [4Fe-4S] cluster is required as a cofactor.

The catalysed reaction is GTP + AH2 + S-adenosyl-L-methionine = (8S)-3',8-cyclo-7,8-dihydroguanosine 5'-triphosphate + 5'-deoxyadenosine + L-methionine + A + H(+). It participates in cofactor biosynthesis; molybdopterin biosynthesis. Catalyzes the cyclization of GTP to (8S)-3',8-cyclo-7,8-dihydroguanosine 5'-triphosphate. The protein is GTP 3',8-cyclase of Cronobacter sakazakii (strain ATCC BAA-894) (Enterobacter sakazakii).